A 530-amino-acid chain; its full sequence is Chondroitin sulfate N-acetylgalactosaminyltransferase 1 (530 aa).

Residues 1–12 (MVRRGLLGWISR) lie on the Cytoplasmic side of the membrane. The chain crosses the membrane as a helical; Signal-anchor for type II membrane protein span at residues 13-33 (VVILLVLLCCAISVLYMLACT). The Lumenal segment spans residues 34-530 (PKGDQEQLGL…QKQKASSKKT (497 aa)). Residues 57-93 (AVLQEREEQHRNYVNSLKRQIAQLKDELQARSEQFRS) adopt a coiled-coil conformation. The disordered stretch occupies residues 88–107 (SEQFRSGQDQASDATSLRSG). Over residues 91 to 105 (FRSGQDQASDATSLR) the composition is skewed to polar residues. 2 N-linked (GlcNAc...) asparagine glycosylation sites follow: asparagine 313 and asparagine 322. Aspartate 358 and histidine 475 together coordinate a divalent metal cation.

It belongs to the chondroitin N-acetylgalactosaminyltransferase family.

Its subcellular location is the golgi apparatus. It localises to the golgi stack membrane. The catalysed reaction is 3-O-(beta-D-GlcA-(1-&gt;3)-beta-D-Gal-(1-&gt;3)-beta-D-Gal-(1-&gt;4)-beta-D-Xyl)-L-seryl-[protein] + UDP-N-acetyl-alpha-D-galactosamine = 3-O-(beta-D-GalNAc-(1-&gt;4)-beta-D-GlcA-(1-&gt;3)-beta-D-Gal-(1-&gt;3)-beta-D-Gal-(1-&gt;4)-beta-D-Xyl)-L-seryl-[protein] + UDP + H(+). Transfers 1,4-N-acetylgalactosamine (GalNAc) from UDP-GalNAc to the non-reducing end of glucuronic acid (GlcUA). Required for addition of the first GalNAc to the core tetrasaccharide linker and for elongation of chondroitin chains. Important role in chondroitin chain biosynthesis in cartilage formation, and subsequent endochondral ossification. Moreover, is involved in the metabolism of aggrecan. In Mus musculus (Mouse), this protein is Chondroitin sulfate N-acetylgalactosaminyltransferase 1.